We begin with the raw amino-acid sequence, 1640 residues long: Clathrin heavy chain 2 (1640 aa).

Ala2 carries the post-translational modification N-acetylalanine. The segment at 2-479 (AQILPVRFQE…TDPMLALSVY (478 aa)) is globular terminal domain. WD40-like repeat stretches follow at residues 24–67 (NIGF…RPIS), 68–107 (AESA…MAEE), 108–149 (VIFW…TSLV), 150–195 (GCQV…QPIE), 196–257 (GHAA…PEAQ), 258–301 (NDFP…ISAD), and 302–330 (TIFV…VCVE). Residue Ser67 is modified to Phosphoserine. Tyr184 carries the post-translational modification Phosphotyrosine. Thr394 bears the Phosphothreonine mark. The tract at residues 449–465 (EKWLKEDKLECSEELGD) is binding site for the uncoating ATPase, involved in lattice disassembly. The tract at residues 480–523 (LRANVPSKVIQCFAETGQFQKIVLYAKKVGYTPDWIFLLRGVMK) is flexible linker. The distal segment stretch occupies residues 524 to 634 (ISPEQGLQFS…QALEHYTDLY (111 aa)). The heavy chain arm stretch occupies residues 524 to 1640 (ISPEQGLQFS…PLVFDFDGHE (1117 aa)). CHCR repeat units follow at residues 537–683 (VQDE…QLCV), 686–828 (ASKY…SEEV), 833–972 (IMAV…QLID), 979–1124 (LSET…VKEA), 1128–1269 (YIRG…FRFA), 1274–1420 (LHIV…LLIN), and 1423–1566 (LLVL…RECF). Tyr634 bears the Phosphotyrosine mark. The interval 639–1640 (AVVHTHLLNP…PLVFDFDGHE (1002 aa)) is proximal segment. Position 737 is an N6-succinyllysine (Lys737). N6-acetyllysine is present on Lys856. Phosphotyrosine is present on Tyr899. A Phosphoserine modification is found at Ser1167. Tyr1206 bears the Phosphotyrosine mark. The tract at residues 1213-1522 (AAKLLYSNVS…YLYKGNNWWA (310 aa)) is involved in binding clathrin light chain. The residue at position 1229 (Ser1229) is a Phosphoserine. Lys1441 carries the post-translational modification N6-acetyllysine; alternate. The residue at position 1441 (Lys1441) is an N6-succinyllysine; alternate. Phosphotyrosine is present on residues Tyr1477 and Tyr1487. Ser1494 is subject to Phosphoserine. Lys1501 carries the N6-acetyllysine modification. A trimerization region spans residues 1551-1640 (QKLLQWFLEE…PLVFDFDGHE (90 aa)).

It belongs to the clathrin heavy chain family. Clathrin triskelions, composed of 3 heavy chains and 3 light chains, are the basic subunits of the clathrin coat. In the presence of light chains, hub assembly is influenced by both the pH and the concentration of calcium. May interact with OCRL. Interacts with AFTPH/aftiphilin. In terms of tissue distribution, maximal levels in skeletal muscle. High levels in heart and testis. Low expression detected in all other tissues.

The protein localises to the cytoplasmic vesicle membrane. It is found in the membrane. Its subcellular location is the coated pit. Its function is as follows. Clathrin is the major protein of the polyhedral coat of coated pits and vesicles. Two different adapter protein complexes link the clathrin lattice either to the plasma membrane or to the trans-Golgi network. This is Clathrin heavy chain 2 (CLTCL1) from Homo sapiens (Human).